A 92-amino-acid chain; its full sequence is Large ribosomal subunit protein bL27 (92 aa).

A propeptide spanning residues 1–9 (MLVMNLQYF) is cleaved from the precursor.

It belongs to the bacterial ribosomal protein bL27 family. Post-translationally, the N-terminus is cleaved by ribosomal processing cysteine protease Prp.

In Heliobacterium modesticaldum (strain ATCC 51547 / Ice1), this protein is Large ribosomal subunit protein bL27.